Reading from the N-terminus, the 89-residue chain is Small ribosomal subunit protein uS15 (89 aa).

This sequence belongs to the universal ribosomal protein uS15 family. Part of the 30S ribosomal subunit. Forms a bridge to the 50S subunit in the 70S ribosome, contacting the 23S rRNA.

Functionally, one of the primary rRNA binding proteins, it binds directly to 16S rRNA where it helps nucleate assembly of the platform of the 30S subunit by binding and bridging several RNA helices of the 16S rRNA. Forms an intersubunit bridge (bridge B4) with the 23S rRNA of the 50S subunit in the ribosome. This Allorhizobium ampelinum (strain ATCC BAA-846 / DSM 112012 / S4) (Agrobacterium vitis (strain S4)) protein is Small ribosomal subunit protein uS15.